Here is a 445-residue protein sequence, read N- to C-terminus: 6-phosphogluconate dehydrogenase, decarboxylating (445 aa).

Residues 1 to 4, 22 to 24, 63 to 65, and Asn91 contribute to the NADP(+) site; these read AVMG, NRS, and VKA. Substrate-binding positions include Asn91 and 117 to 119; that span reads SGG. Lys172 functions as the Proton acceptor in the catalytic mechanism. 175–176 contacts substrate; the sequence is HN. Glu179 (proton donor) is an active-site residue. Substrate contacts are provided by Tyr180, Lys249, Arg276, Arg434, and His440.

The protein belongs to the 6-phosphogluconate dehydrogenase family. As to quaternary structure, homodimer.

The catalysed reaction is 6-phospho-D-gluconate + NADP(+) = D-ribulose 5-phosphate + CO2 + NADPH. Its pathway is carbohydrate degradation; pentose phosphate pathway; D-ribulose 5-phosphate from D-glucose 6-phosphate (oxidative stage): step 3/3. Functionally, catalyzes the oxidative decarboxylation of 6-phosphogluconate to ribulose 5-phosphate and CO(2), with concomitant reduction of NADP to NADPH. The protein is 6-phosphogluconate dehydrogenase, decarboxylating (gnd) of Raoultella terrigena (Klebsiella terrigena).